The sequence spans 455 residues: MLDIKLIRENPELVKNDLKKRGELEKIKWIDEILKLDAEWRAKLKEINKLRHERNKIAIEIGKRRKKGEPVEELLAKSKEIVKRIESLEKEVEELKKKIDYYLWRLPNITHPSVPIGESEEDNVPIRFWGKARVWEGHLERFLEQSQGKMEYEVLEWRPKLHVDLLEILGGADFARAAKVSGSRFYYLLNEIVILDLALIRFALDELIKKGFTPVIPPYMVRRFVEEGSTTFEDFEDVIYKVEGEDLYLIPTAEHPLAGMHANEILDGKDLPLLYVGISPCFRKEAGTAGKDTKGIFRVHQFHKVEQFVYSRPEESWEWHERIIRNAEELFQKLEIPYRVVNICTGDLGYVAAKKYDIEAWMPGQGRFREVVSASNCTDWQARRLNIRFRDRTDEKPRYVHTLNSTAIATSRAIVAILENHQEEDGTVKIPKVLWKYTGFKEIVPVEKKERCCSS.

252–254 (TAE) is a binding site for L-serine. ATP is bound by residues 283-285 (RKE) and Val-299. Position 306 (Glu-306) interacts with L-serine. 370–373 (EVVS) serves as a coordination point for ATP. Thr-406 is a binding site for L-serine.

It belongs to the class-II aminoacyl-tRNA synthetase family. Type-1 seryl-tRNA synthetase subfamily. Homodimer. The tRNA molecule binds across the dimer.

It is found in the cytoplasm. It catalyses the reaction tRNA(Ser) + L-serine + ATP = L-seryl-tRNA(Ser) + AMP + diphosphate + H(+). It carries out the reaction tRNA(Sec) + L-serine + ATP = L-seryl-tRNA(Sec) + AMP + diphosphate + H(+). The protein operates within aminoacyl-tRNA biosynthesis; selenocysteinyl-tRNA(Sec) biosynthesis; L-seryl-tRNA(Sec) from L-serine and tRNA(Sec): step 1/1. Its function is as follows. Catalyzes the attachment of serine to tRNA(Ser). Is also able to aminoacylate tRNA(Sec) with serine, to form the misacylated tRNA L-seryl-tRNA(Sec), which will be further converted into selenocysteinyl-tRNA(Sec). This Pyrococcus abyssi (strain GE5 / Orsay) protein is Serine--tRNA ligase.